The following is a 151-amino-acid chain: Protein E6 (151 aa).

Zinc fingers lie at residues 30 to 66 and 103 to 139; these read CVYCKKELCRADVYNVAFTEIKIVYRDNNPYAVCKQC and CHRCQRPLGPEEKQKLVDEKKRFHEIAGRWTGQCANC. A PDZ-binding domain motif is present at residues 149–151; it reads TQV.

It belongs to the papillomaviridae E6 protein family. As to quaternary structure, forms homodimers. Interacts with ubiquitin-protein ligase UBE3A/E6-AP and thus forms a complex with human TP53. Interacts with human NFX1 and MAGI3. Interacts with human IRF3; this interaction inhibits the establishment of antiviral state. Interacts with human TYK2; this interaction inhibits JAK-STAT activation by interferon alpha. Interacts with host DLG1; this interaction leads to the proteasomal degradation of DLG1.

The protein localises to the host cytoplasm. Its subcellular location is the host nucleus. Plays a major role in the induction and maintenance of cellular transformation. Acts mainly as an oncoprotein by stimulating the destruction of many host cell key regulatory proteins. E6 associates with host UBE3A/E6-AP ubiquitin-protein ligase, and inactivates tumor suppressors TP53 and TP73 by targeting them to the 26S proteasome for degradation. In turn, DNA damage and chromosomal instabilities increase and lead to cell proliferation and cancer development. The complex E6/E6AP targets several other substrates to degradation via the proteasome including host DLG1 or NFX1, a repressor of human telomerase reverse transcriptase (hTERT). The resulting increased expression of hTERT prevents the shortening of telomere length leading to cell immortalization. Other cellular targets including BAK1, Fas-associated death domain-containing protein (FADD) and procaspase 8, are degraded by E6/E6AP causing inhibition of apoptosis. E6 also inhibits immune response by interacting with host IRF3 and TYK2. These interactions prevent IRF3 transcriptional activities and inhibit TYK2-mediated JAK-STAT activation by interferon alpha resulting in inhibition of the interferon signaling pathway. This is Protein E6 from Human papillomavirus 51.